The primary structure comprises 136 residues: Histone H3, embryonic (136 aa).

A disordered region spans residues 1–43 (MARTKQTARKSTGGKAPRKQLATKAARKSAPATGGVKKPHRYR). Residue K5 is modified to N6-methylated lysine. K10 is modified (N6-acetyllysine; alternate). The residue at position 10 (K10) is an N6-methylated lysine; alternate. S11 bears the Phosphoserine mark. K15 and K24 each carry N6-acetyllysine. K28, K37, and K80 each carry N6-methylated lysine.

It belongs to the histone H3 family. The nucleosome is a histone octamer containing two molecules each of H2A, H2B, H3 and H4 assembled in one H3-H4 heterotetramer and two H2A-H2B heterodimers. The octamer wraps approximately 147 bp of DNA. In terms of processing, acetylation is generally linked to gene activation. Methylation at Lys-5 is linked to gene activation. Methylation at Lys-10 is linked to gene repression.

The protein resides in the nucleus. The protein localises to the chromosome. In terms of biological role, core component of nucleosome. Nucleosomes wrap and compact DNA into chromatin, limiting DNA accessibility to the cellular machineries which require DNA as a template. Histones thereby play a central role in transcription regulation, DNA repair, DNA replication and chromosomal stability. DNA accessibility is regulated via a complex set of post-translational modifications of histones, also called histone code, and nucleosome remodeling. This Paracentrotus lividus (Common sea urchin) protein is Histone H3, embryonic.